The primary structure comprises 107 residues: MMKVLVVVALLPTLISYSSSEGIDDLEADELLSLMANEQTRKECIPKHHECTSNKHGCCRGNFFKYKCQCTTVVTQDGEQTERCFCGTPPHHKAAELVVGFGKKIFG.

Residues 1 to 20 (MMKVLVVVALLPTLISYSSS) form the signal peptide. The propeptide occupies 21 to 41 (EGIDDLEADELLSLMANEQTR). Cystine bridges form between Cys44-Cys59, Cys51-Cys68, Cys58-Cys86, and Cys70-Cys84.

The protein belongs to the neurotoxin 19 (CSTX) family. 04 (U1-Lctx) subfamily. As to expression, expressed by the venom gland.

The protein resides in the secreted. The chain is U1-lycotoxin-Ls1b from Lycosa singoriensis (Wolf spider).